Reading from the N-terminus, the 100-residue chain is Large ribosomal subunit protein uL23 (100 aa).

This sequence belongs to the universal ribosomal protein uL23 family. As to quaternary structure, part of the 50S ribosomal subunit. Contacts protein L29, and trigger factor when it is bound to the ribosome.

Functionally, one of the early assembly proteins it binds 23S rRNA. One of the proteins that surrounds the polypeptide exit tunnel on the outside of the ribosome. Forms the main docking site for trigger factor binding to the ribosome. This chain is Large ribosomal subunit protein uL23, found in Prochlorococcus marinus (strain MIT 9301).